The following is a 102-amino-acid chain: ATP-dependent Clp protease adapter protein ClpS (102 aa).

Belongs to the ClpS family. In terms of assembly, binds to the N-terminal domain of the chaperone ClpA.

Involved in the modulation of the specificity of the ClpAP-mediated ATP-dependent protein degradation. This chain is ATP-dependent Clp protease adapter protein ClpS, found in Shewanella woodyi (strain ATCC 51908 / MS32).